The primary structure comprises 240 residues: Protein unc-119 homolog A (240 aa).

Gly residues predominate over residues 1–12 (MKVKKGGGGTGS). The tract at residues 1–62 (MKVKKGGGGT…PLQGKQPIGP (62 aa)) is disordered. A phosphoserine; by CK2 mark is found at serine 37, serine 39, and serine 41. Tyrosine 131 contacts tetradecanoate.

This sequence belongs to the PDE6D/unc-119 family. As to quaternary structure, may interact with GTP-bound ARL1. Interacts with ARL2 and ARL3 (GTP-bound forms); this promotes the release of myristoylated cargo proteins. Found in a complex with ARL3, RP2 and UNC119; RP2 induces hydrolysis of GTP ARL3 in the complex, leading to the release of UNC119. Interacts with NPHP3 (when myristoylated). Interacts with CYS1 (when myristoylated). Interacts with MACIR; interaction only takes place when UNC119 is not liganded with myristoylated proteins. Interacts with CABP4; in the absence of calcium. Interacts with DNM1; leading to a decrease of DNM1 GTPase activity. Interacts with LCK; this interaction plays a crucial role in activation of LCK. Interacts with FYN. Interacts with RAB11A; in a cell cycle-dependent manner. Interacts with LYN (via SH2 and SH3 domains); leading to LYN activation. Found in a complex with ABL1, ABL2, CRK and UNC119; leading to the inhibition of CRK phosphorylation by ABL kinases. Interacts with CD44. Interacts with KLHL18 (via kelch repeats). Interacts with PPP3CA, PPP3CB and PPP3CC. Interacts with USP48; this interaction promotes UNC119 stability. Phosphorylation suppresses its interaction with KLHL18 and down-regulates its KLHL18-mediated degradation. Phosphorylated more under light conditions than dark conditions. Dephosphorylated by calcineurin. As to expression, localized in photoreceptor synapses in the outer plexiform layer of the retina.

Its subcellular location is the cytoplasm. It is found in the cytoskeleton. The protein resides in the microtubule organizing center. The protein localises to the centrosome. It localises to the spindle. Its subcellular location is the spindle pole. Involved in synaptic functions in photoreceptor cells, the signal transduction in immune cells as a Src family kinase activator, endosome recycling, the uptake of bacteria and endocytosis, protein trafficking in sensory neurons and as lipid-binding chaperone with specificity for a diverse subset of myristoylated proteins. Specifically binds the myristoyl moiety of a subset of N-terminally myristoylated proteins and is required for their localization. Binds myristoylated GNAT1 and is required for G-protein localization and trafficking in sensory neurons. Probably plays a role in trafficking proteins in photoreceptor cells. Plays important roles in mediating Src family kinase signals for the completion of cytokinesis via RAB11A. This is Protein unc-119 homolog A (Unc119) from Mus musculus (Mouse).